The chain runs to 1097 residues: DNA-directed RNA polymerase subunit beta (1097 aa).

The segment at 1072-1097 is disordered; it reads QDVNPRRSTPSRPTYESLGVADYDED.

Belongs to the RNA polymerase beta chain family. As to quaternary structure, in cyanobacteria the RNAP catalytic core is composed of 2 alpha, 1 beta, 1 beta', 1 gamma and 1 omega subunit. When a sigma factor is associated with the core the holoenzyme is formed, which can initiate transcription.

It carries out the reaction RNA(n) + a ribonucleoside 5'-triphosphate = RNA(n+1) + diphosphate. Functionally, DNA-dependent RNA polymerase catalyzes the transcription of DNA into RNA using the four ribonucleoside triphosphates as substrates. This chain is DNA-directed RNA polymerase subunit beta, found in Synechococcus sp. (strain CC9902).